Here is a 338-residue protein sequence, read N- to C-terminus: Glycerol-3-phosphate dehydrogenase [NAD(P)+] (338 aa).

Positions 13, 14, and 108 each coordinate NADPH. Positions 108, 139, and 141 each coordinate sn-glycerol 3-phosphate. Residue alanine 143 participates in NADPH binding. Sn-glycerol 3-phosphate is bound by residues lysine 194, aspartate 247, serine 257, arginine 258, and asparagine 259. Catalysis depends on lysine 194, which acts as the Proton acceptor. Residue arginine 258 coordinates NADPH. NADPH is bound by residues valine 282 and glutamate 284.

Belongs to the NAD-dependent glycerol-3-phosphate dehydrogenase family.

It localises to the cytoplasm. It carries out the reaction sn-glycerol 3-phosphate + NAD(+) = dihydroxyacetone phosphate + NADH + H(+). The catalysed reaction is sn-glycerol 3-phosphate + NADP(+) = dihydroxyacetone phosphate + NADPH + H(+). It functions in the pathway membrane lipid metabolism; glycerophospholipid metabolism. In terms of biological role, catalyzes the reduction of the glycolytic intermediate dihydroxyacetone phosphate (DHAP) to sn-glycerol 3-phosphate (G3P), the key precursor for phospholipid synthesis. This is Glycerol-3-phosphate dehydrogenase [NAD(P)+] from Streptococcus pyogenes serotype M28 (strain MGAS6180).